Here is a 647-residue protein sequence, read N- to C-terminus: Acetyl-coenzyme A synthetase (647 aa).

Residues 190 to 193, Thr310, and Asn334 contribute to the CoA site; that span reads RGGK. Residues 386–388, 410–415, Asp499, and Arg514 each bind ATP; these read GEP and DTWWQT. Ser522 contributes to the CoA binding site. Arg525 is a binding site for ATP. Mg(2+)-binding residues include Val536, His538, and Val541. Arg583 contributes to the CoA binding site. Lys608 carries the N6-acetyllysine modification.

It belongs to the ATP-dependent AMP-binding enzyme family. The cofactor is Mg(2+). Post-translationally, acetylated. Deacetylation by the SIR2-homolog deacetylase activates the enzyme.

The enzyme catalyses acetate + ATP + CoA = acetyl-CoA + AMP + diphosphate. Functionally, catalyzes the conversion of acetate into acetyl-CoA (AcCoA), an essential intermediate at the junction of anabolic and catabolic pathways. AcsA undergoes a two-step reaction. In the first half reaction, AcsA combines acetate with ATP to form acetyl-adenylate (AcAMP) intermediate. In the second half reaction, it can then transfer the acetyl group from AcAMP to the sulfhydryl group of CoA, forming the product AcCoA. This is Acetyl-coenzyme A synthetase from Xanthomonas oryzae pv. oryzae (strain MAFF 311018).